Here is a 227-residue protein sequence, read N- to C-terminus: N-acetyltransferase 8B (227 aa).

At methionine 1–threonine 42 the chain is on the cytoplasmic side. The helical; Signal-anchor for type II membrane protein transmembrane segment at leucine 43 to alanine 63 threads the bilayer. The N-acetyltransferase domain occupies isoleucine 61–histidine 214. The Lumenal segment spans residues leucine 64 to leucine 227. Lysine 99 bears the N6-acetyllysine mark.

Belongs to the NAT8 family. Post-translationally, acetylation on Lys-99 modulates enzymatic activity.

It localises to the endoplasmic reticulum-Golgi intermediate compartment membrane. The protein resides in the endoplasmic reticulum membrane. It catalyses the reaction L-lysyl-[protein] + acetyl-CoA = N(6)-acetyl-L-lysyl-[protein] + CoA + H(+). Allosterically regulated by acetylation at residue Lys-99. Its function is as follows. Endoplasmic reticulum (ER)-membrane-bound lysine N-acetyltransferase catalyzing the N6-acetylation of lysine residues in the lumen of the ER in various proteins, including PROM1 and BACE1, using acetyl-CoA as acetyl donor. Thereby, may regulate apoptosis through the acetylation and the regulation of the expression of PROM1. Acetylates and stabilizes BACE1 immature protein, leading to increased steady-state levels in neurons. By acting on BACE1 expression, may regulate amyloid beta-peptide formation. N(6)-lysine acetylation in ER maintains protein homeostasis and regulates reticulophagy. The polypeptide is N-acetyltransferase 8B (Homo sapiens (Human)).